A 230-amino-acid chain; its full sequence is MMITLDHVTKQYKSSARPALDDINVKIDKGEFVFLIGPSGSGKSTFMRLLLAAETPTSGDVRVSKFHVNKLRGRHVPKLRQVIGCVFQDFRLLQQKTVYDNVAFALEVIGKRTDAINRVVPEVLETVGLSGKANRLPDELSGGEQQRVAIARAFVNRPLVLLADEPTGNLDPETSRDIMDLLERINRTGTTVLMATHDHHIVDSMRQRVVELSLGRLVRDEQRGVYGMDR.

An ABC transporter domain is found at 3–228 (ITLDHVTKQY…RDEQRGVYGM (226 aa)). Residue 37 to 44 (GPSGSGKS) participates in ATP binding.

This sequence belongs to the ABC transporter superfamily. Homodimer. Forms a membrane-associated complex with FtsX.

Its subcellular location is the cell membrane. In terms of biological role, part of the ABC transporter FtsEX involved in cellular division. Has ATPase activity. This chain is Cell division ATP-binding protein FtsE, found in Mycobacterium tuberculosis (strain ATCC 25618 / H37Rv).